A 328-amino-acid chain; its full sequence is D-cysteine desulfhydrase (328 aa).

Lys-51 carries the N6-(pyridoxal phosphate)lysine modification.

This sequence belongs to the ACC deaminase/D-cysteine desulfhydrase family. As to quaternary structure, homodimer. Pyridoxal 5'-phosphate serves as cofactor.

It catalyses the reaction D-cysteine + H2O = hydrogen sulfide + pyruvate + NH4(+) + H(+). Functionally, catalyzes the alpha,beta-elimination reaction of D-cysteine and of several D-cysteine derivatives. It could be a defense mechanism against D-cysteine. This is D-cysteine desulfhydrase from Salmonella choleraesuis (strain SC-B67).